A 164-amino-acid chain; its full sequence is CB1 cannabinoid receptor-interacting protein 1 (164 aa).

The protein belongs to the CNRIP family. As to quaternary structure, interacts with the cannabinoid receptor CNR1 (via C-terminus). Does not interact with cannabinoid receptor CNR2.

Suppresses cannabinoid receptor CNR1-mediated tonic inhibition of voltage-gated calcium channels. Functionally, does not suppress cannabinoid receptor CNR1-mediated tonic inhibition of voltage-gated calcium channels. The polypeptide is CB1 cannabinoid receptor-interacting protein 1 (CNRIP1) (Homo sapiens (Human)).